The primary structure comprises 572 residues: Proline--tRNA ligase (572 aa).

Belongs to the class-II aminoacyl-tRNA synthetase family. ProS type 1 subfamily. Homodimer.

It localises to the cytoplasm. It carries out the reaction tRNA(Pro) + L-proline + ATP = L-prolyl-tRNA(Pro) + AMP + diphosphate. Its function is as follows. Catalyzes the attachment of proline to tRNA(Pro) in a two-step reaction: proline is first activated by ATP to form Pro-AMP and then transferred to the acceptor end of tRNA(Pro). As ProRS can inadvertently accommodate and process non-cognate amino acids such as alanine and cysteine, to avoid such errors it has two additional distinct editing activities against alanine. One activity is designated as 'pretransfer' editing and involves the tRNA(Pro)-independent hydrolysis of activated Ala-AMP. The other activity is designated 'posttransfer' editing and involves deacylation of mischarged Ala-tRNA(Pro). The misacylated Cys-tRNA(Pro) is not edited by ProRS. In Escherichia coli O17:K52:H18 (strain UMN026 / ExPEC), this protein is Proline--tRNA ligase.